Consider the following 274-residue polypeptide: Large ribosomal subunit protein uL2cz/uL2cy (274 aa).

The segment at 224-252 (NPVDHPHGGGEGRAPIGRKKPVTPWGYPA) is disordered.

This sequence belongs to the universal ribosomal protein uL2 family. Part of the 50S ribosomal subunit.

Its subcellular location is the plastid. The protein localises to the chloroplast. This Capsella bursa-pastoris (Shepherd's purse) protein is Large ribosomal subunit protein uL2cz/uL2cy (rpl2-A).